Reading from the N-terminus, the 616-residue chain is Dihydroxy-acid dehydratase (616 aa).

Residue D81 coordinates Mg(2+). Residue C122 participates in [2Fe-2S] cluster binding. Mg(2+) contacts are provided by D123 and K124. At K124 the chain carries N6-carboxylysine. C195 contacts [2Fe-2S] cluster. E491 serves as a coordination point for Mg(2+). The active-site Proton acceptor is S517.

Belongs to the IlvD/Edd family. Homodimer. [2Fe-2S] cluster is required as a cofactor. The cofactor is Mg(2+).

The catalysed reaction is (2R)-2,3-dihydroxy-3-methylbutanoate = 3-methyl-2-oxobutanoate + H2O. The enzyme catalyses (2R,3R)-2,3-dihydroxy-3-methylpentanoate = (S)-3-methyl-2-oxopentanoate + H2O. The protein operates within amino-acid biosynthesis; L-isoleucine biosynthesis; L-isoleucine from 2-oxobutanoate: step 3/4. It functions in the pathway amino-acid biosynthesis; L-valine biosynthesis; L-valine from pyruvate: step 3/4. In terms of biological role, functions in the biosynthesis of branched-chain amino acids. Catalyzes the dehydration of (2R,3R)-2,3-dihydroxy-3-methylpentanoate (2,3-dihydroxy-3-methylvalerate) into 2-oxo-3-methylpentanoate (2-oxo-3-methylvalerate) and of (2R)-2,3-dihydroxy-3-methylbutanoate (2,3-dihydroxyisovalerate) into 2-oxo-3-methylbutanoate (2-oxoisovalerate), the penultimate precursor to L-isoleucine and L-valine, respectively. The chain is Dihydroxy-acid dehydratase from Escherichia coli (strain K12 / MC4100 / BW2952).